A 302-amino-acid polypeptide reads, in one-letter code: MSVNLSLHPRSVPEPRALLELIQPITWFPPIWAYLCGTVSVGIWPGEKWPLVLLGMVLAGPLVCGMSQAANNWCDRHVDAVNEPDRPIPSGRIPGRWGLYIALLMTVLSLAVGWMLGPWGFGATVFGVLAAWAYSVEPIRLKRSGWWGPGLVALCYEGLPWFTGAAVLSAGAPSFFIVTVALLYAFGAHGIMTLNDFKALEGDRQHGVRSLPVMLGPEVAAKLACTVMAMAQILVITLLVIWGKPIHAGIITALLVAQLFAMRVLLRDPAGKCPWYNGTGVTLYVLGMMVAAFAIRGLEVLP.

9 helical membrane passes run 25-45 (ITWF…GIWP), 49-69 (WPLV…MSQA), 97-117 (WGLY…WMLG), 119-139 (WGFG…VEPI), 145-165 (GWWG…FTGA), 166-186 (AVLS…LYAF), 223-243 (LACT…VIWG), 246-266 (IHAG…RVLL), and 275-295 (WYNG…AFAI).

Its subcellular location is the cell membrane. The protein operates within porphyrin-containing compound metabolism; bacteriochlorophyll biosynthesis (light-independent). Its function is as follows. Catalyzes the esterification of bacteriochlorophyllide a by geranylgeraniol-PPi. The chain is Bacteriochlorophyll synthase 33 kDa chain (bchG) from Cereibacter sphaeroides (strain ATCC 17023 / DSM 158 / JCM 6121 / CCUG 31486 / LMG 2827 / NBRC 12203 / NCIMB 8253 / ATH 2.4.1.) (Rhodobacter sphaeroides).